The following is a 324-amino-acid chain: tRNA U34 carboxymethyltransferase (324 aa).

Carboxy-S-adenosyl-L-methionine contacts are provided by residues Lys92, Trp106, Lys111, Gly131, 181–182 (LE), Met197, Tyr201, and Arg316.

The protein belongs to the class I-like SAM-binding methyltransferase superfamily. CmoB family. In terms of assembly, homotetramer.

It catalyses the reaction carboxy-S-adenosyl-L-methionine + 5-hydroxyuridine(34) in tRNA = 5-carboxymethoxyuridine(34) in tRNA + S-adenosyl-L-homocysteine + H(+). Its function is as follows. Catalyzes carboxymethyl transfer from carboxy-S-adenosyl-L-methionine (Cx-SAM) to 5-hydroxyuridine (ho5U) to form 5-carboxymethoxyuridine (cmo5U) at position 34 in tRNAs. This chain is tRNA U34 carboxymethyltransferase, found in Syntrophotalea carbinolica (strain DSM 2380 / NBRC 103641 / GraBd1) (Pelobacter carbinolicus).